A 229-amino-acid polypeptide reads, in one-letter code: Uracil-DNA glycosylase (229 aa).

Asp64 acts as the Proton acceptor in catalysis.

It belongs to the uracil-DNA glycosylase (UDG) superfamily. UNG family. In terms of assembly, monomer.

The protein resides in the cytoplasm. The enzyme catalyses Hydrolyzes single-stranded DNA or mismatched double-stranded DNA and polynucleotides, releasing free uracil.. Its function is as follows. Excises uracil residues from the DNA which can arise as a result of misincorporation of dUMP residues by DNA polymerase or due to deamination of cytosine. This is Uracil-DNA glycosylase from Escherichia coli O157:H7.